A 179-amino-acid polypeptide reads, in one-letter code: ATP-dependent protease subunit HslV (179 aa).

Thr-7 is a catalytic residue. Residues Ala-163, Cys-166, and Thr-169 each contribute to the Na(+) site.

This sequence belongs to the peptidase T1B family. HslV subfamily. In terms of assembly, a double ring-shaped homohexamer of HslV is capped on each side by a ring-shaped HslU homohexamer. The assembly of the HslU/HslV complex is dependent on binding of ATP.

It localises to the cytoplasm. The catalysed reaction is ATP-dependent cleavage of peptide bonds with broad specificity.. With respect to regulation, allosterically activated by HslU binding. Functionally, protease subunit of a proteasome-like degradation complex believed to be a general protein degrading machinery. This chain is ATP-dependent protease subunit HslV, found in Amoebophilus asiaticus (strain 5a2).